The following is a 353-amino-acid chain: Photosystem II D2 protein (353 aa).

Thr2 bears the N-acetylthreonine mark. A Phosphothreonine modification is found at Thr2. A helical membrane pass occupies residues 41 to 61 (CAYFALGGWFTGTTFVTSWYT). His118 contributes to the chlorophyll a binding site. The helical transmembrane segment at 125–141 (GFMLRQFELARSVQLRP) threads the bilayer. Residues Gln130 and Asn143 each contribute to the pheophytin a site. The chain crosses the membrane as a helical span at residues 153-166 (VFVSVFLIYPLGQS). His198 is a binding site for chlorophyll a. A helical transmembrane segment spans residues 208–228 (AALLCAIHGATVENTLFEDGD). A plastoquinone contacts are provided by His215 and Phe262. His215 is a Fe cation binding site. Position 269 (His269) interacts with Fe cation. A helical transmembrane segment spans residues 279 to 295 (GLWMSALGVVGLALNLR).

Belongs to the reaction center PufL/M/PsbA/D family. In terms of assembly, PSII is composed of 1 copy each of membrane proteins PsbA, PsbB, PsbC, PsbD, PsbE, PsbF, PsbH, PsbI, PsbJ, PsbK, PsbL, PsbM, PsbT, PsbX, PsbY, PsbZ, Psb30/Ycf12, at least 3 peripheral proteins of the oxygen-evolving complex and a large number of cofactors. It forms dimeric complexes. It depends on The D1/D2 heterodimer binds P680, chlorophylls that are the primary electron donor of PSII, and subsequent electron acceptors. It shares a non-heme iron and each subunit binds pheophytin, quinone, additional chlorophylls, carotenoids and lipids. There is also a Cl(-1) ion associated with D1 and D2, which is required for oxygen evolution. The PSII complex binds additional chlorophylls, carotenoids and specific lipids. as a cofactor.

It is found in the plastid. The protein resides in the chloroplast thylakoid membrane. It catalyses the reaction 2 a plastoquinone + 4 hnu + 2 H2O = 2 a plastoquinol + O2. In terms of biological role, photosystem II (PSII) is a light-driven water:plastoquinone oxidoreductase that uses light energy to abstract electrons from H(2)O, generating O(2) and a proton gradient subsequently used for ATP formation. It consists of a core antenna complex that captures photons, and an electron transfer chain that converts photonic excitation into a charge separation. The D1/D2 (PsbA/PsbD) reaction center heterodimer binds P680, the primary electron donor of PSII as well as several subsequent electron acceptors. D2 is needed for assembly of a stable PSII complex. This Pelargonium hortorum (Common geranium) protein is Photosystem II D2 protein.